The following is a 746-amino-acid chain: EF-hand domain-containing family member C2 (746 aa).

3 DM10 domains span residues 75-182 (DKQV…RKMG), 226-367 (DGHV…RTKY), and 429-536 (ESNT…EKHA). Positions 557–592 (PRSREIRQVFAAADPQHTKVIEYDPFRNLIVSITDG) constitute an EF-hand domain.

Its subcellular location is the cytoplasm. The protein resides in the cytoskeleton. It is found in the cilium axoneme. In terms of biological role, microtubule inner protein (MIP) part of the dynein-decorated doublet microtubules (DMTs) in cilia axoneme, which is required for motile cilia beating. This chain is EF-hand domain-containing family member C2 (EFHC2), found in Gallus gallus (Chicken).